The following is a 297-amino-acid chain: Lipoyl synthase (297 aa).

[4Fe-4S] cluster-binding residues include Cys-37, Cys-42, Cys-48, Cys-63, Cys-67, Cys-70, and Ser-276. The Radical SAM core domain maps to Trp-49 to Leu-265.

Belongs to the radical SAM superfamily. Lipoyl synthase family. It depends on [4Fe-4S] cluster as a cofactor.

The protein localises to the cytoplasm. The catalysed reaction is [[Fe-S] cluster scaffold protein carrying a second [4Fe-4S](2+) cluster] + N(6)-octanoyl-L-lysyl-[protein] + 2 oxidized [2Fe-2S]-[ferredoxin] + 2 S-adenosyl-L-methionine + 4 H(+) = [[Fe-S] cluster scaffold protein] + N(6)-[(R)-dihydrolipoyl]-L-lysyl-[protein] + 4 Fe(3+) + 2 hydrogen sulfide + 2 5'-deoxyadenosine + 2 L-methionine + 2 reduced [2Fe-2S]-[ferredoxin]. It functions in the pathway protein modification; protein lipoylation via endogenous pathway; protein N(6)-(lipoyl)lysine from octanoyl-[acyl-carrier-protein]: step 2/2. Functionally, catalyzes the radical-mediated insertion of two sulfur atoms into the C-6 and C-8 positions of the octanoyl moiety bound to the lipoyl domains of lipoate-dependent enzymes, thereby converting the octanoylated domains into lipoylated derivatives. The polypeptide is Lipoyl synthase (Rickettsia prowazekii (strain Madrid E)).